A 267-amino-acid chain; its full sequence is Thiamine thiazole synthase (267 aa).

NAD(+) contacts are provided by residues serine 41, 60–61, glycine 68, valine 132, and 160–162; these read ER and HVD. Residues aspartate 162 and histidine 177 each coordinate Fe cation. Residue methionine 227 participates in NAD(+) binding. Glycine is bound at residue arginine 237.

The protein belongs to the THI4 family. As to quaternary structure, homooctamer; tetramer of dimers. Requires Fe(2+) as cofactor.

It catalyses the reaction hydrogen sulfide + glycine + NAD(+) = ADP-5-ethyl-4-methylthiazole-2-carboxylate + nicotinamide + 3 H2O + H(+). The protein operates within cofactor biosynthesis; thiamine diphosphate biosynthesis. Its function is as follows. Involved in the biosynthesis of the thiazole moiety of thiamine. Catalyzes the conversion of NAD and glycine to adenosine diphosphate 5-(2-hydroxyethyl)-4-methylthiazole-2-carboxylate (ADT), an adenylated thiazole intermediate, using free sulfide as a source of sulfur. In Saccharolobus islandicus (strain Y.N.15.51 / Yellowstone #2) (Sulfolobus islandicus), this protein is Thiamine thiazole synthase.